A 602-amino-acid polypeptide reads, in one-letter code: VIN3-like protein 1 (602 aa).

Residues methionine 1–glycine 38 are disordered. Over residues lysine 9 to lysine 22 the composition is skewed to basic residues. Residues arginine 67 to valine 137 form a PHD-type zinc finger. The Nuclear localization signal signature appears at tryptophan 144 to alanine 151. The region spanning valine 242 to isoleucine 340 is the Fibronectin type-III domain. A disordered region spans residues leucine 430–asparagine 470. The segment at alanine 502 to histidine 602 is VIN3-Interacting Domain (VID).

Interacts with VIN3 and VIL2. The heterodimer made of VIN3 and VIL1 is required for establishing the vernalization-induced epigenetic silencing of FLC. Component of the plant homeodomain / polycomb repressive complex 2 (PHD-PRC2) large complex during prolonged cold, composed of core PRC2 components (VRN2, EZA1, FIE and MSI1), and three related PHD finger proteins (VIL1, VIL2 and VIN3) that mediates histone H3 trimethylation on 'Lys-27' (H3K27me3). As to expression, accumulates in shoot and root apices, and in leaves.

It localises to the nucleus. The protein localises to the nucleus speckle. Its function is as follows. Involved in both the vernalization and photoperiod pathways by regulating expression of the related floral repressors FLOWERING LOCUS C (FLC) and FLOWERING LOCUS M (FLM). Together with VIN3, required during vernalization for the modifications of FLC and FLM chromatin that are associated with an epigenetically silenced state (e.g. chromatin modifications, histone deacetylation, and trimethylated H3 'Lys-4' H3K4me3 and 'Lys-27' H3K27me3) and with acquisition of competence to flower. Promotes flowering in short days (SD=8 hours light/16 hours dark). Associates dynamically at FLC locus; during vernalization, binds to specific sites, but when in warm conditions, distributed along the whole locus. This chain is VIN3-like protein 1 (VIL1), found in Arabidopsis thaliana (Mouse-ear cress).